Here is a 449-residue protein sequence, read N- to C-terminus: MDVLGWLLLPLLLLCTQPHHGARAMNDIGDYVGSNLEISWLPNLDGLMEGYARNFRPGIGGAPVNVALALEVASIDHISEANMEYTMTVFLHQSWRDSRLSYNHTNETLGLDSRFVDKLWLPDTFIVNAKSAWFHDVTVENKLIRLQPDGVILYSIRITSTVACDMDLAKYPLDEQECMLDLESYGYSSEDIVYYWSENQEQIHGLDRLQLAQFTITSYRFTTELMNFKSAGQFPRLSLHFQLRRNRGVYIIQSYMPSVLLVAMSWVSFWISQAAVPARVSLGITTVLTMTTLMVSARSSLPRASAIKALDVYFWICYVFVFAALVEYAFAHFNADYRKKRKAKVKVTKPRAEMDVRNAIVLFSLSAAGVSQELAISRRQGRVPGNLMGSYRSVEVEAKKEGGSRPGGPGGIRSRLKPIDADTIDIYARAVFPAAFAAVNIIYWAAYTM.

Residues 1 to 24 form the signal peptide; the sequence is MDVLGWLLLPLLLLCTQPHHGARA. The Extracellular segment spans residues 25 to 251; the sequence is MNDIGDYVGS…QLRRNRGVYI (227 aa). Residues N103 and N106 are each glycosylated (N-linked (GlcNAc...) asparagine). Cysteines 164 and 178 form a disulfide. The helical transmembrane segment at 252–271 threads the bilayer; it reads IQSYMPSVLLVAMSWVSFWI. The Cytoplasmic portion of the chain corresponds to 272–275; it reads SQAA. The chain crosses the membrane as a helical span at residues 276 to 298; sequence VPARVSLGITTVLTMTTLMVSAR. At 299-308 the chain is on the extracellular side; the sequence is SSLPRASAIK. A helical transmembrane segment spans residues 309 to 331; sequence ALDVYFWICYVFVFAALVEYAFA. The Cytoplasmic portion of the chain corresponds to 332-423; it reads HFNADYRKKR…SRLKPIDADT (92 aa). S390 carries the post-translational modification Phosphoserine. A helical membrane pass occupies residues 424-446; sequence IDIYARAVFPAAFAAVNIIYWAA. Topologically, residues 447–449 are extracellular; sequence YTM.

This sequence belongs to the ligand-gated ion channel (TC 1.A.9) family. Gamma-aminobutyric acid receptor (TC 1.A.9.5) subfamily. GABRD sub-subfamily. As to quaternary structure, heteropentamer, formed by a combination of alpha (GABRA1-6), beta (GABRB1-3), gamma (GABRG1-3), delta (GABRD), epsilon (GABRE), rho (GABRR1-3), pi (GABRP) and theta (GABRQ) chains, each subunit exhibiting distinct physiological and pharmacological properties.

It localises to the cell membrane. It catalyses the reaction chloride(in) = chloride(out). Delta subunit of the heteropentameric ligand-gated chloride channel gated by gamma-aminobutyric acid (GABA), a major inhibitory neurotransmitter in the brain. GABA-gated chloride channels, also named GABA(A) receptors (GABAAR), consist of five subunits arranged around a central pore and contain GABA active binding site(s) located at the alpha and beta subunit interface(s). When activated by GABA, GABAARs selectively allow the flow of chloride anions across the cell membrane down their electrochemical gradient. GABAARs containing delta/GABRD subunits are predominantly expressed and located in extrasynaptic or perisynaptic positions on hippocampus and cerebellar granule cells, and contribute to the tonic GABAergic inhibition. GABAAR containing alpha-4-beta-3-delta subunits can simultaneously bind GABA and histamine where histamine binds at the interface of two neighboring beta subunits, which may be involved in the regulation of sleep and wakefulness. The chain is Gamma-aminobutyric acid receptor subunit delta from Mus musculus (Mouse).